A 279-amino-acid polypeptide reads, in one-letter code: Shikimate dehydrogenase (NADP(+)) (279 aa).

Residues 19 to 21 (SRS) and Thr-66 each bind shikimate. Lys-70 acts as the Proton acceptor in catalysis. The shikimate site is built by Asn-91 and Asp-106. NADP(+) is bound by residues 129-133 (GAGGA), 152-157 (NRTLER), and Ile-218. Tyr-220 is a shikimate binding site. Gly-241 provides a ligand contact to NADP(+).

It belongs to the shikimate dehydrogenase family. In terms of assembly, homodimer.

The enzyme catalyses shikimate + NADP(+) = 3-dehydroshikimate + NADPH + H(+). It functions in the pathway metabolic intermediate biosynthesis; chorismate biosynthesis; chorismate from D-erythrose 4-phosphate and phosphoenolpyruvate: step 4/7. In terms of biological role, involved in the biosynthesis of the chorismate, which leads to the biosynthesis of aromatic amino acids. Catalyzes the reversible NADPH linked reduction of 3-dehydroshikimate (DHSA) to yield shikimate (SA). In Gluconobacter oxydans (strain 621H) (Gluconobacter suboxydans), this protein is Shikimate dehydrogenase (NADP(+)).